A 716-amino-acid chain; its full sequence is Splicing factor Cactin (716 aa).

Residues Met-1–Arg-104 are disordered. The segment covering Asp-10–Ser-22 has biased composition (basic and acidic residues). Residues Gly-25 to Arg-45 are compositionally biased toward low complexity. Residues Ser-46–Arg-61 show a composition bias toward basic residues. Basic and acidic residues predominate over residues Ser-81 to Ser-95. Residues Ser-153–Phe-201 adopt a coiled-coil conformation. Ser-450 carries the phosphoserine modification. Positions Val-466–Asp-525 are disordered. Residues Glu-468 to Ala-500 show a composition bias toward acidic residues.

This sequence belongs to the CACTIN family. In terms of assembly, interacts with At5g63440.

The protein localises to the nucleus speckle. In terms of biological role, plays a role in pre-mRNA splicing by facilitating excision of a subset of introns. Required for embryogenesis. The chain is Splicing factor Cactin (CTN) from Arabidopsis thaliana (Mouse-ear cress).